We begin with the raw amino-acid sequence, 92 residues long: Small ribosomal subunit protein uS19 (92 aa).

Belongs to the universal ribosomal protein uS19 family.

Functionally, protein S19 forms a complex with S13 that binds strongly to the 16S ribosomal RNA. The chain is Small ribosomal subunit protein uS19 from Acidiphilium cryptum (strain JF-5).